The chain runs to 365 residues: Flagellar P-ring protein (365 aa).

Residues 1 to 19 form the signal peptide; the sequence is MIKFLSALILLLVTTAAQA.

The protein belongs to the FlgI family. The basal body constitutes a major portion of the flagellar organelle and consists of four rings (L,P,S, and M) mounted on a central rod.

The protein localises to the periplasm. It localises to the bacterial flagellum basal body. Assembles around the rod to form the L-ring and probably protects the motor/basal body from shearing forces during rotation. The polypeptide is Flagellar P-ring protein (Shigella flexneri serotype 5b (strain 8401)).